Here is an 87-residue protein sequence, read N- to C-terminus: U3-theraphotoxin-Hhn1a 7 (87 aa).

The N-terminal stretch at 1-24 is a signal peptide; sequence MVNMKASMFLTFAGLVLLFVVSYA. The propeptide occupies 25-52; it reads SESEEKEFPKEMLSSIFAVDNDFKQEER. Disulfide bonds link Cys-54-Cys-67, Cys-61-Cys-72, and Cys-66-Cys-79.

This sequence belongs to the neurotoxin 10 (Hwtx-1) family. 51 (Hntx-8) subfamily. Hntx-8 sub-subfamily. In terms of tissue distribution, expressed by the venom gland.

The protein localises to the secreted. In terms of biological role, ion channel inhibitor. In Cyriopagopus hainanus (Chinese bird spider), this protein is U3-theraphotoxin-Hhn1a 7.